The sequence spans 141 residues: Large ribosomal subunit protein uL11 (141 aa).

The protein belongs to the universal ribosomal protein uL11 family. As to quaternary structure, part of the ribosomal stalk of the 50S ribosomal subunit. Interacts with L10 and the large rRNA to form the base of the stalk. L10 forms an elongated spine to which L12 dimers bind in a sequential fashion forming a multimeric L10(L12)X complex. One or more lysine residues are methylated.

Functionally, forms part of the ribosomal stalk which helps the ribosome interact with GTP-bound translation factors. The sequence is that of Large ribosomal subunit protein uL11 from Chlamydia trachomatis serovar A (strain ATCC VR-571B / DSM 19440 / HAR-13).